We begin with the raw amino-acid sequence, 376 residues long: Actin (376 aa).

This sequence belongs to the actin family.

The protein resides in the cytoplasm. It is found in the cytoskeleton. It catalyses the reaction ATP + H2O = ADP + phosphate + H(+). Functionally, actins are highly conserved proteins that are involved in various types of cell motility and are ubiquitously expressed in all eukaryotic cells. This chain is Actin, found in Trypanosoma cruzi.